We begin with the raw amino-acid sequence, 694 residues long: Follicle-stimulating hormone receptor (694 aa).

A signal peptide spans 1 to 17; sequence MAFLWISFLVFLGSGSG. 2 disulfides stabilise this stretch: Cys18-Cys25 and Cys23-Cys32. The LRRNT domain maps to 18 to 46; that stretch reads CHHRICHCSDRVFICQESKVTEIPSDIPR. The Extracellular portion of the chain corresponds to 18-367; the sequence is CHHRICHCSD…EDIMGYNFLR (350 aa). 9 LRR repeats span residues 49 to 72, 73 to 97, 98 to 118, 119 to 143, 144 to 169, 170 to 192, 193 to 216, 217 to 240, and 241 to 259; these read VEMR…FRDL, EKIE…LPKL, HEIR…AFWN, LPNL…KIQS, HQKV…AGLS, SESE…AFNG, TQLD…IFQG, ANGP…GLKN, and LKKL…PNLD. 2 N-linked (GlcNAc...) asparagine glycosylation sites follow: Asn191 and Asn199. An N-linked (GlcNAc...) asparagine glycan is attached at Asn268. Cystine bridges form between Cys275–Cys347, Cys276–Cys292, Cys276–Cys357, and Cys292–Cys339. Asn293 carries an N-linked (GlcNAc...) asparagine glycan. Tyr336 is subject to Sulfotyrosine. A helical membrane pass occupies residues 368–388; sequence VLIWFISILSITGNIVVLVIL. At 389–399 the chain is on the cytoplasmic side; that stretch reads ITSQYKLTVPR. A helical transmembrane segment spans residues 400–422; it reads FLMCNLAFADLCIGIYLLLIASV. Residues 423-444 lie on the Extracellular side of the membrane; it reads DIHTKSQYHNYAIDWQTGAGCD. Cysteines 443 and 518 form a disulfide. The chain crosses the membrane as a helical span at residues 445-466; sequence AAGFFTVFASELSVYTLTAITL. Residues 467 to 486 are Cytoplasmic-facing; sequence ERWHTITYAMQLDRKVRLRH. Residues 487–509 traverse the membrane as a helical segment; that stretch reads AASIMLIGWIFAFSVALLPIFGV. Residues 510-529 lie on the Extracellular side of the membrane; sequence SSYMKVSICLPMDIDSPLSQ. Residues 530 to 551 traverse the membrane as a helical segment; sequence FYVISLLVLNVLASVIICTCYT. Topologically, residues 552 to 574 are cytoplasmic; the sequence is HIYFTVRNPNIISSTSDAKIAKR. A helical membrane pass occupies residues 575–598; the sequence is MAMLIFTDFLCMAPISFFAISASV. The Extracellular segment spans residues 599–609; that stretch reads KMPLITVSKSK. The helical transmembrane segment at 610–631 threads the bilayer; sequence ILLVLFYPINSCANPFLYAVFT. At 632–694 the chain is on the cytoplasmic side; the sequence is KTFRRDFFIL…YKLVPLNHLS (63 aa).

The protein belongs to the G-protein coupled receptor 1 family. FSH/LSH/TSH subfamily. As to quaternary structure, homotrimer. Functions as a homotrimer binding the FSH hormone heterodimer composed of CGA and FSHB. Interacts with ARRB2. Interacts with APPL2; interaction is independent of follicle stimulating hormone stimulation. In terms of processing, N-glycosylated; indirectly required for FSH-binding, possibly via a conformational change that allows high affinity binding of hormone. Sulfated.

The protein resides in the cell membrane. Its function is as follows. G protein-coupled receptor for follitropin, the follicle-stimulating hormone. Through cAMP production activates the downstream PI3K-AKT and ERK1/ERK2 signaling pathways. This chain is Follicle-stimulating hormone receptor (FSHR), found in Notamacropus eugenii (Tammar wallaby).